Consider the following 290-residue polypeptide: MFKDFFNRGSKKKKYVTVQDSKQNDVPTGIMTKCPKCKKIMYTKELSENLNVCFNCDHHLSLTAYKRIEAISDEGTFKEFDKGMTSANPLDFPGYEEKIKKDQEKTGLDEAVVTGTAELGGIEYGVAVMDARFRMGSMGSVVGEKICRIIDYCTEHRLPFILFSASGGARMQEGIISLMQMGKTSVSLKRHSDAGLLYISYITNPTTGGVSASFASVGDINLSEPKALIGFAGRRVIEQTINEKLPDDFQTAEFLLEHGQLDKVVHRKEMRSTLESILKMHAGQEVNKDA.

Residues 30–290 form the CoA carboxyltransferase N-terminal domain; sequence IMTKCPKCKK…HAGQEVNKDA (261 aa). Residues Cys-34, Cys-37, Cys-53, and Cys-56 each contribute to the Zn(2+) site. A C4-type zinc finger spans residues 34 to 56; that stretch reads CPKCKKIMYTKELSENLNVCFNC.

Belongs to the AccD/PCCB family. As to quaternary structure, acetyl-CoA carboxylase is a heterohexamer composed of biotin carboxyl carrier protein (AccB), biotin carboxylase (AccC) and two subunits each of ACCase subunit alpha (AccA) and ACCase subunit beta (AccD). Requires Zn(2+) as cofactor.

It localises to the cytoplasm. The catalysed reaction is N(6)-carboxybiotinyl-L-lysyl-[protein] + acetyl-CoA = N(6)-biotinyl-L-lysyl-[protein] + malonyl-CoA. It participates in lipid metabolism; malonyl-CoA biosynthesis; malonyl-CoA from acetyl-CoA: step 1/1. In terms of biological role, component of the acetyl coenzyme A carboxylase (ACC) complex. Biotin carboxylase (BC) catalyzes the carboxylation of biotin on its carrier protein (BCCP) and then the CO(2) group is transferred by the transcarboxylase to acetyl-CoA to form malonyl-CoA. This chain is Acetyl-coenzyme A carboxylase carboxyl transferase subunit beta, found in Staphylococcus carnosus (strain TM300).